We begin with the raw amino-acid sequence, 176 residues long: ATP-dependent protease subunit HslV (176 aa).

The active site involves T2. Residues G157, C160, and T163 each contribute to the Na(+) site.

This sequence belongs to the peptidase T1B family. HslV subfamily. A double ring-shaped homohexamer of HslV is capped on each side by a ring-shaped HslU homohexamer. The assembly of the HslU/HslV complex is dependent on binding of ATP.

It is found in the cytoplasm. It catalyses the reaction ATP-dependent cleavage of peptide bonds with broad specificity.. Allosterically activated by HslU binding. In terms of biological role, protease subunit of a proteasome-like degradation complex believed to be a general protein degrading machinery. This chain is ATP-dependent protease subunit HslV, found in Ectopseudomonas mendocina (strain ymp) (Pseudomonas mendocina).